Here is a 582-residue protein sequence, read N- to C-terminus: Hydrazine dehydrogenase (582 aa).

Positions Met1–Ala32 are cleaved as a signal peptide. Residues Cys121, Cys124, His125, His141, Cys151, Cys154, His155, His159, Cys170, Cys175, His176, His191, Cys216, Cys219, His220, Cys227, Cys230, His231, His234, Cys247, Cys250, His251, His267, Cys297, Cys300, His301, His306, Cys342, Cys345, His346, His454, and Tyr462 each contribute to the heme c site. Residues Gly561–His582 form a disordered region. Residues His567 to His582 are compositionally biased toward basic and acidic residues.

Homotrimer; subunits are linked by two covalent bonds between Tyr-462 of one subunit and heme P460 of an adjacent subunit. May form 24-mer of an octamer of trimers. Heme c serves as cofactor.

It is found in the anammoxosome. The catalysed reaction is hydrazine + 4 Fe(III)-[cytochrome c] = N2 + 4 Fe(II)-[cytochrome c] + 4 H(+). The protein operates within nitrogen metabolism. Is strongly and competitively inhibited by NO and hydroxylamine. Its function is as follows. Catalyzes the four-electron oxidation of hydrazine to N2. The electrons derived from hydrazine oxidation may be transferred to the quinone pool and exploited to promote the generation of proton-motive force (pmf) across the anammoxosome membrane. Is involved in anaerobic ammonium oxidation (anammox), a biological process in which nitrite is used as the electron acceptor in the conversion of ammonium to dinitrogen gas (N2) and water; this bacterial process has a major role in the Earth's nitrogen cycle and has been estimated to synthesize up to 50% of the dinitrogen gas emitted into our atmosphere from the oceans. Cannot oxidize hydroxylamine to NO. This is Hydrazine dehydrogenase from Kuenenia stuttgartiensis.